A 379-amino-acid chain; its full sequence is L-lactate dehydrogenase (379 aa).

One can recognise an FMN hydroxy acid dehydrogenase domain in the interval 1–379; the sequence is MIISSSTDYR…ISPDSLVRGL (379 aa). Tyrosine 24 contributes to the substrate binding site. The FMN site is built by serine 106 and glutamine 127. Residue tyrosine 129 coordinates substrate. Threonine 155 lines the FMN pocket. Arginine 164 provides a ligand contact to substrate. Position 251 (lysine 251) interacts with FMN. Histidine 275 serves as the catalytic Proton acceptor. Arginine 278 contributes to the substrate binding site. 306 to 330 contacts FMN; the sequence is DSGIRSGLDVVRMIAQGADGVLIGR.

The protein belongs to the FMN-dependent alpha-hydroxy acid dehydrogenase family. Requires FMN as cofactor.

The protein resides in the cell inner membrane. It catalyses the reaction (S)-lactate + A = pyruvate + AH2. In terms of biological role, catalyzes the conversion of L-lactate to pyruvate. Is coupled to the respiratory chain. This chain is L-lactate dehydrogenase, found in Allorhizobium ampelinum (strain ATCC BAA-846 / DSM 112012 / S4) (Agrobacterium vitis (strain S4)).